The primary structure comprises 143 residues: Ribosome-binding factor A (143 aa).

The segment at 123–143 is disordered; the sequence is DKSLQENYKQNDKETKAEKLR.

The protein belongs to the RbfA family. Monomer. Binds 30S ribosomal subunits, but not 50S ribosomal subunits or 70S ribosomes.

It localises to the cytoplasm. Functionally, one of several proteins that assist in the late maturation steps of the functional core of the 30S ribosomal subunit. Associates with free 30S ribosomal subunits (but not with 30S subunits that are part of 70S ribosomes or polysomes). Required for efficient processing of 16S rRNA. May interact with the 5'-terminal helix region of 16S rRNA. The protein is Ribosome-binding factor A of Francisella tularensis subsp. mediasiatica (strain FSC147).